A 341-amino-acid chain; its full sequence is L-threonine 3-dehydrogenase (341 aa).

Cys38 lines the Zn(2+) pocket. Residues Thr40 and His43 each act as charge relay system in the active site. Zn(2+)-binding residues include His63, Glu64, Cys93, Cys96, Cys99, and Cys107. NAD(+)-binding positions include Ile175, Asp195, Arg200, 262-264, and 286-287; these read LGI and IY.

Belongs to the zinc-containing alcohol dehydrogenase family. In terms of assembly, homotetramer. The cofactor is Zn(2+).

The protein resides in the cytoplasm. The enzyme catalyses L-threonine + NAD(+) = (2S)-2-amino-3-oxobutanoate + NADH + H(+). The protein operates within amino-acid degradation; L-threonine degradation via oxydo-reductase pathway; glycine from L-threonine: step 1/2. Its function is as follows. Catalyzes the NAD(+)-dependent oxidation of L-threonine to 2-amino-3-ketobutyrate. The sequence is that of L-threonine 3-dehydrogenase from Escherichia fergusonii (strain ATCC 35469 / DSM 13698 / CCUG 18766 / IAM 14443 / JCM 21226 / LMG 7866 / NBRC 102419 / NCTC 12128 / CDC 0568-73).